The following is a 667-amino-acid chain: Probable export ATP-binding/permease protein MacB (667 aa).

Positions 22–260 constitute an ABC transporter domain; that stretch reads LRLAGVSRRF…PVEEVQPAAE (239 aa). Residue 58–65 coordinates ATP; that stretch reads GASGSGKS. 4 helical membrane-spanning segments follow: residues 292 to 312, 540 to 560, 601 to 621, and 630 to 650; these read LLTM…SAIG, LTLL…IGVM, IGGV…ALFV, and LGSI…FGFV.

This sequence belongs to the ABC transporter superfamily. Macrolide exporter (TC 3.A.1.122) family. As to quaternary structure, probably part of a tripartite efflux system, which is composed of an inner membrane transporter, a periplasmic membrane fusion protein, and an outer membrane component.

The protein localises to the cell inner membrane. Functionally, probably part of a tripartite efflux system. The chain is Probable export ATP-binding/permease protein MacB from Pseudomonas entomophila (strain L48).